The following is a 488-amino-acid chain: Germacrene A hydroxylase (488 aa).

Residues T7–T23 traverse the membrane as a helical; Signal-anchor for type II membrane protein segment. N-linked (GlcNAc...) asparagine glycans are attached at residues N169, N260, N379, and N410. C432 is a binding site for heme.

The protein belongs to the cytochrome P450 family. As to expression, expressed in floral glandular trichomes.

It localises to the endoplasmic reticulum membrane. It carries out the reaction (+)-(R)-germacrene A + 3 reduced [NADPH--hemoprotein reductase] + 3 O2 = germacra-1(10),4,11(13)-trien-12-oate + 3 oxidized [NADPH--hemoprotein reductase] + 4 H2O + 4 H(+). It functions in the pathway secondary metabolite biosynthesis; terpenoid biosynthesis. Functionally, involved in the biosynthesis of germacrene-derived sesquiterpene lactones. Component of the parthenolide biosynthetic pathway; parthenolide and conjugates are promising anti-cancer drugs highly active against colon cancer cells. Catalyzes three consecutive oxidations of germacrene A to produce germacrene A acid. The polypeptide is Germacrene A hydroxylase (Tanacetum parthenium (Feverfew)).